The primary structure comprises 173 residues: NADH-ubiquinone oxidoreductase chain 6 (173 aa).

The next 5 membrane-spanning stretches (helical) occupy residues 1–21, 27–47, 48–68, 87–107, and 139–159; these read MTYF…AVAS, YGVV…MSLG, MSFV…VVFV, VVGY…VGGL, and CGVG…FVVL.

The protein belongs to the complex I subunit 6 family.

The protein resides in the mitochondrion membrane. It catalyses the reaction a ubiquinone + NADH + 5 H(+)(in) = a ubiquinol + NAD(+) + 4 H(+)(out). In terms of biological role, core subunit of the mitochondrial membrane respiratory chain NADH dehydrogenase (Complex I) that is believed to belong to the minimal assembly required for catalysis. Complex I functions in the transfer of electrons from NADH to the respiratory chain. The immediate electron acceptor for the enzyme is believed to be ubiquinone. This Synthliboramphus antiquus (Ancient murrelet) protein is NADH-ubiquinone oxidoreductase chain 6 (MT-ND6).